Reading from the N-terminus, the 206-residue chain is Large ribosomal subunit protein uL4 (206 aa).

It belongs to the universal ribosomal protein uL4 family. In terms of assembly, part of the 50S ribosomal subunit.

In terms of biological role, one of the primary rRNA binding proteins, this protein initially binds near the 5'-end of the 23S rRNA. It is important during the early stages of 50S assembly. It makes multiple contacts with different domains of the 23S rRNA in the assembled 50S subunit and ribosome. Forms part of the polypeptide exit tunnel. The sequence is that of Large ribosomal subunit protein uL4 from Nitrobacter winogradskyi (strain ATCC 25391 / DSM 10237 / CIP 104748 / NCIMB 11846 / Nb-255).